We begin with the raw amino-acid sequence, 115 residues long: Large ribosomal subunit protein bL20 (115 aa).

Belongs to the bacterial ribosomal protein bL20 family.

Functionally, binds directly to 23S ribosomal RNA and is necessary for the in vitro assembly process of the 50S ribosomal subunit. It is not involved in the protein synthesizing functions of that subunit. The sequence is that of Large ribosomal subunit protein bL20 from Mycoplasmoides gallisepticum (strain R(low / passage 15 / clone 2)) (Mycoplasma gallisepticum).